Consider the following 109-residue polypeptide: uncharacterized protein (109 aa).

In terms of domain architecture, HTH hxlR-type spans 10-109 (APFEYTLSLI…WGMAQGGPHM (100 aa)).

This is an uncharacterized protein from Bacillus subtilis (strain 168).